We begin with the raw amino-acid sequence, 355 residues long: 3'-5' exonuclease (355 aa).

Positions 1-121 (MDKYLIKLPN…PSPEKEKPEK (121 aa)) are disordered. Basic and acidic residues-rich tracts occupy residues 17–29 (VSDK…KETP), 36–50 (AKKD…KENT), and 72–92 (KNLD…ENPP). Residues S105 and S113 each carry the phosphoserine modification. In terms of domain architecture, 3'-5' exonuclease spans 147–315 (VMQWVEKQKE…GQVIYRDLEQ (169 aa)). Mg(2+)-binding residues include D164, E166, and D302.

Belongs to the WRNexo family.

The protein resides in the nucleus. Has exonuclease activity on both single-stranded and duplex templates bearing overhangs, but not blunt ended duplex DNA, and cleaves in a 3'-5' direction. Essential for the formation of DNA replication focal centers. Has an important role in maintaining genome stability. The chain is 3'-5' exonuclease from Drosophila ananassae (Fruit fly).